The chain runs to 638 residues: MKFIKFNDSTIDSFLFMMLTDLAKTLTKSEAVEVEYGVQSYYNPFEKKIYMSHFWKDRAAEDMEAGLKSDVYLRSVGTRYSSLHEFANFLNDIHRHLTFKSFAKQLFMLLEDIRIEECIKRERPGTKHVFAKRKDMYRKHFSTQLTLNLERSIFTDALFCAIYFKLTAESPLETLPSMREDIDLMRPFIEQQLLRVYEADSTRQVLKIVEDLMDGLEEVLDKDMLNTYFFLPELDYAKAAEQPLFEEEKKAPKLSDDITLPKQSDGDEDIHEEEMPTWHRETEAPSKSFLQFDIEHGAKSDLGKDASREGDDGDQALGSVQGSARQTKRKDYSKLEALESQKDQPNGAGMADGKENKYAFPIYKEPQPATSEEELSYKQQAKTIESYQKRLKQMIQKTLEHKKTLPRTDLHAGRLNNKLLRYFTERNPRLFYKKQEPSSEIDAVFTLLVDCSASMFDKMDETKRGIVLFHEALKSVAVPHQIVGFWEDTNDATEKSQPNYFNTVIPFQSSLRQDSGPAIMQLEPEEDNRDGYAIRQMTKKMLHRSEAQKFLIVFSDGEPAAFGYEQNGIVDTSEAVIEARKRGIEVINVFLSNSEIEESQMKTIQDMYGKFSIFVPDVDQLPDVLYPLLKKLLHKSIG.

The N-terminal stretch at 1–31 is a signal peptide; the sequence is MKFIKFNDSTIDSFLFMMLTDLAKTLTKSEA. Composition is skewed to basic and acidic residues over residues 247-256, 273-284, 301-310, and 329-342; these read EEKKAPKLSD, EEMPTWHRETEA, DLGKDASREG, and RKDYSKLEALESQK. Disordered stretches follow at residues 247–285 and 301–354; these read EEKKAPKLSDDITLPKQSDGDEDIHEEEMPTWHRETEAP and DLGK…ADGK. The 188-residue stretch at 445–632 folds into the VWFA domain; sequence FTLLVDCSAS…DVLYPLLKKL (188 aa).

This is an uncharacterized protein from Bacillus subtilis (strain 168).